Reading from the N-terminus, the 276-residue chain is 5-deoxy-glucuronate isomerase (276 aa).

It belongs to the isomerase IolB family.

It catalyses the reaction 5-deoxy-D-glucuronate = 5-dehydro-2-deoxy-D-gluconate. The protein operates within polyol metabolism; myo-inositol degradation into acetyl-CoA; acetyl-CoA from myo-inositol: step 4/7. Involved in the isomerization of 5-deoxy-glucuronate (5DG) to 5-dehydro-2-deoxy-D-gluconate (DKG or 2-deoxy-5-keto-D-gluconate). The polypeptide is 5-deoxy-glucuronate isomerase (Geobacillus kaustophilus (strain HTA426)).